The sequence spans 188 residues: Holliday junction branch migration complex subunit RuvA (188 aa).

Positions 1-62 are domain I; that stretch reads MIVGVRGVLV…EDAQLLYGFL (62 aa). The interval 63–135 is domain II; that stretch reads ELGEKKLFER…LSGFDTELII (73 aa). The interval 135–139 is flexible linker; that stretch reads ISASE. The segment at 140-188 is domain III; the sequence is PKSLAVAQASEALESLGFKKDKISKALGSCSAVDTAILVKEALKLLQTI.

Belongs to the RuvA family. Homotetramer. Forms an RuvA(8)-RuvB(12)-Holliday junction (HJ) complex. HJ DNA is sandwiched between 2 RuvA tetramers; dsDNA enters through RuvA and exits via RuvB. An RuvB hexamer assembles on each DNA strand where it exits the tetramer. Each RuvB hexamer is contacted by two RuvA subunits (via domain III) on 2 adjacent RuvB subunits; this complex drives branch migration. In the full resolvosome a probable DNA-RuvA(4)-RuvB(12)-RuvC(2) complex forms which resolves the HJ.

It localises to the cytoplasm. Functionally, the RuvA-RuvB-RuvC complex processes Holliday junction (HJ) DNA during genetic recombination and DNA repair, while the RuvA-RuvB complex plays an important role in the rescue of blocked DNA replication forks via replication fork reversal (RFR). RuvA specifically binds to HJ cruciform DNA, conferring on it an open structure. The RuvB hexamer acts as an ATP-dependent pump, pulling dsDNA into and through the RuvAB complex. HJ branch migration allows RuvC to scan DNA until it finds its consensus sequence, where it cleaves and resolves the cruciform DNA. The sequence is that of Holliday junction branch migration complex subunit RuvA from Sulfurimonas denitrificans (strain ATCC 33889 / DSM 1251) (Thiomicrospira denitrificans (strain ATCC 33889 / DSM 1251)).